The following is a 503-amino-acid chain: Probable zinc metalloprotease UREG_01421 (503 aa).

The signal sequence occupies residues 1 to 24 (MHSLSSALAGSTFVLLFLCLLASA). Residue N105 is glycosylated (N-linked (GlcNAc...) asparagine). Zn(2+)-binding residues include H176, D196, and E232. Residue N247 is glycosylated (N-linked (GlcNAc...) asparagine). D259 contacts Zn(2+). The Fibronectin type-III domain occupies 416 to 503 (MPRNVRVSTR…RGVAVLPFPA (88 aa)). Residue N429 is glycosylated (N-linked (GlcNAc...) asparagine).

Belongs to the peptidase M28 family. M28B subfamily. Zn(2+) is required as a cofactor.

The protein resides in the secreted. In Uncinocarpus reesii (strain UAMH 1704), this protein is Probable zinc metalloprotease UREG_01421.